Consider the following 366-residue polypeptide: GTPase Obg (366 aa).

Residues 1 to 161 form the Obg domain; it reads MRFVDEARIQ…FNLRLELKIL (161 aa). The tract at residues 121–148 is disordered; the sequence is SGGRGGKGNEHFKSSTMRAPRFSQPGEP. The OBG-type G domain occupies 162 to 334; sequence ADAGLIGLPN…LVQELWQVCE (173 aa). GTP-binding positions include 168 to 175, 193 to 197, 217 to 220, 287 to 290, and 315 to 317; these read GLPNAGKS, FTTLT, DIPG, NKID, and SAR. The Mg(2+) site is built by S175 and T195.

The protein belongs to the TRAFAC class OBG-HflX-like GTPase superfamily. OBG GTPase family. Monomer. Mg(2+) serves as cofactor.

The protein resides in the cytoplasm. Functionally, an essential GTPase which binds GTP, GDP and possibly (p)ppGpp with moderate affinity, with high nucleotide exchange rates and a fairly low GTP hydrolysis rate. Plays a role in control of the cell cycle, stress response, ribosome biogenesis and in those bacteria that undergo differentiation, in morphogenesis control. The protein is GTPase Obg of Desulfovibrio desulfuricans (strain ATCC 27774 / DSM 6949 / MB).